The sequence spans 22 residues: 2.39 kDa venom peptide (22 aa).

In terms of processing, contains 2 disulfide bonds. As to expression, expressed by the venom gland.

The protein localises to the secreted. In terms of biological role, not lethal to mice by intraperitoneal or intracerebroventricular injections in doses up to 100 micrograms. The sequence is that of 2.39 kDa venom peptide from Heterometrus spinifer (Asia giant forest scorpion).